The sequence spans 148 residues: 3-dehydroquinate dehydratase (148 aa).

The active-site Proton acceptor is the Y23. Residues N75, H81, and D88 each contribute to the substrate site. Catalysis depends on H101, which acts as the Proton donor. Residues 102-103 and R112 contribute to the substrate site; that span reads IS.

The protein belongs to the type-II 3-dehydroquinase family. In terms of assembly, homododecamer.

The catalysed reaction is 3-dehydroquinate = 3-dehydroshikimate + H2O. It functions in the pathway metabolic intermediate biosynthesis; chorismate biosynthesis; chorismate from D-erythrose 4-phosphate and phosphoenolpyruvate: step 3/7. Its function is as follows. Catalyzes a trans-dehydration via an enolate intermediate. This Methylococcus capsulatus (strain ATCC 33009 / NCIMB 11132 / Bath) protein is 3-dehydroquinate dehydratase.